A 233-amino-acid chain; its full sequence is Enolase-phosphatase E1 (233 aa).

The Mg(2+) site is built by aspartate 6 and glutamate 8. Substrate-binding positions include 128-129 (SS) and lysine 163. Aspartate 188 is a Mg(2+) binding site.

The protein belongs to the HAD-like hydrolase superfamily. MasA/MtnC family. As to quaternary structure, monomer. Mg(2+) serves as cofactor.

The protein resides in the cytoplasm. Its subcellular location is the nucleus. The enzyme catalyses 5-methylsulfanyl-2,3-dioxopentyl phosphate + H2O = 1,2-dihydroxy-5-(methylsulfanyl)pent-1-en-3-one + phosphate. It participates in amino-acid biosynthesis; L-methionine biosynthesis via salvage pathway; L-methionine from S-methyl-5-thio-alpha-D-ribose 1-phosphate: step 3/6. Its pathway is amino-acid biosynthesis; L-methionine biosynthesis via salvage pathway; L-methionine from S-methyl-5-thio-alpha-D-ribose 1-phosphate: step 4/6. Functionally, bifunctional enzyme that catalyzes the enolization of 2,3-diketo-5-methylthiopentyl-1-phosphate (DK-MTP-1-P) into the intermediate 2-hydroxy-3-keto-5-methylthiopentenyl-1-phosphate (HK-MTPenyl-1-P), which is then dephosphorylated to form the acireductone 1,2-dihydroxy-3-keto-5-methylthiopentene (DHK-MTPene). This is Enolase-phosphatase E1 from Yarrowia lipolytica (strain CLIB 122 / E 150) (Yeast).